Consider the following 301-residue polypeptide: Ornithine carbamoyltransferase (301 aa).

Carbamoyl phosphate-binding positions include arginine 100 and 127 to 130 (HPCQ). L-ornithine-binding positions include asparagine 158, aspartate 221, and 225–226 (SM). Carbamoyl phosphate is bound by residues 260–261 (CL) and arginine 288.

The protein belongs to the aspartate/ornithine carbamoyltransferase superfamily. OTCase family.

The protein localises to the cytoplasm. It carries out the reaction carbamoyl phosphate + L-ornithine = L-citrulline + phosphate + H(+). It participates in amino-acid biosynthesis; L-arginine biosynthesis; L-arginine from L-ornithine and carbamoyl phosphate: step 1/3. Reversibly catalyzes the transfer of the carbamoyl group from carbamoyl phosphate (CP) to the N(epsilon) atom of ornithine (ORN) to produce L-citrulline. The protein is Ornithine carbamoyltransferase of Shewanella oneidensis (strain ATCC 700550 / JCM 31522 / CIP 106686 / LMG 19005 / NCIMB 14063 / MR-1).